The sequence spans 646 residues: Ribonuclease Y (646 aa).

Residues 4–24 (VLVVLLSLVLVVLSVLILAVA) traverse the membrane as a helical segment. Disordered regions lie at residues 43 to 62 (PRTP…DFDE) and 69 to 118 (LPAP…HGGS). In terms of domain architecture, KH spans 336–402 (VVTVLHLPGD…RITLAALVSD (67 aa)). One can recognise an HD domain in the interval 462–555 (VLAHLIESAH…TQAADQISGG (94 aa)).

The protein belongs to the RNase Y family.

It localises to the cell membrane. Functionally, endoribonuclease that initiates mRNA decay. The chain is Ribonuclease Y from Frankia casuarinae (strain DSM 45818 / CECT 9043 / HFP020203 / CcI3).